The following is a 106-amino-acid chain: Large ribosomal subunit protein eL42 (106 aa).

It belongs to the eukaryotic ribosomal protein eL42 family.

In Meyerozyma guilliermondii (strain ATCC 6260 / CBS 566 / DSM 6381 / JCM 1539 / NBRC 10279 / NRRL Y-324) (Yeast), this protein is Large ribosomal subunit protein eL42 (RPL44).